Consider the following 196-residue polypeptide: Chromophore lyase CpcT/CpeT (196 aa).

It belongs to the CpcT/CpeT biliprotein lyase family.

In terms of biological role, covalently attaches a chromophore to Cys residue(s) of phycobiliproteins. The chain is Chromophore lyase CpcT/CpeT from Synechocystis sp. (strain ATCC 27184 / PCC 6803 / Kazusa).